A 290-amino-acid chain; its full sequence is 4-hydroxybenzoate octaprenyltransferase (290 aa).

A run of 7 helical transmembrane segments spans residues 33 to 53 (LWAL…AVFV), 99 to 119 (LFVV…TMTI), 141 to 161 (LPQV…FAAV), 163 to 183 (ESVP…AVAY), 213 to 233 (FIIG…GWLN), 237 to 257 (WGYY…QKLI), and 268 to 288 (AFMN…MSYW).

The protein belongs to the UbiA prenyltransferase family. The cofactor is Mg(2+).

It is found in the cell inner membrane. It carries out the reaction all-trans-octaprenyl diphosphate + 4-hydroxybenzoate = 4-hydroxy-3-(all-trans-octaprenyl)benzoate + diphosphate. Its pathway is cofactor biosynthesis; ubiquinone biosynthesis. Functionally, catalyzes the prenylation of para-hydroxybenzoate (PHB) with an all-trans polyprenyl group. Mediates the second step in the final reaction sequence of ubiquinone-8 (UQ-8) biosynthesis, which is the condensation of the polyisoprenoid side chain with PHB, generating the first membrane-bound Q intermediate 3-octaprenyl-4-hydroxybenzoate. This chain is 4-hydroxybenzoate octaprenyltransferase, found in Escherichia fergusonii (strain ATCC 35469 / DSM 13698 / CCUG 18766 / IAM 14443 / JCM 21226 / LMG 7866 / NBRC 102419 / NCTC 12128 / CDC 0568-73).